Consider the following 276-residue polypeptide: MSWLQVIVLAVVQGLTEFLPVSSSGHLAIVSRVFFDDDAGASFTAVTQLGTEVAVLVYFARDIGRIATAWFRGLRNPGRRDADYRLGWYVIIGTIPIGVIGLLLKDEIRTAARNLWAIAIALIVFSAVIAAAEYFGRQVRHVEQLTWRDGVIVGVAQCLALLPGVSRSGATISAGLFLGLDRELAARFGFLLAIPAVFASGLFSLPDAFAPVGEGMSATGPQLLVATVIAFVVGFAAVAWFLRFLVRHGMYWFVGYRVVLGVVVLILLSTGVVAAI.

8 helical membrane-spanning segments follow: residues 1-21 (MSWL…FLPV), 39-59 (AGAS…LVYF), 84-104 (YRLG…GLLL), 115-135 (LWAI…AEYF), 159-179 (LALL…LFLG), 190-210 (FLLA…DAFA), 222-242 (QLLV…AWFL), and 253-273 (FVGY…TGVV).

This sequence belongs to the UppP family.

The protein localises to the cell membrane. The enzyme catalyses di-trans,octa-cis-undecaprenyl diphosphate + H2O = di-trans,octa-cis-undecaprenyl phosphate + phosphate + H(+). Functionally, catalyzes the dephosphorylation of undecaprenyl diphosphate (UPP). Confers resistance to bacitracin. The polypeptide is Undecaprenyl-diphosphatase (Mycobacterium sp. (strain KMS)).